Consider the following 1524-residue polypeptide: DNA-directed RNA polymerase subunit beta' (1524 aa).

Positions 58, 60, 73, and 76 each coordinate Zn(2+). Residues D739, D741, and D743 each contribute to the Mg(2+) site. Residues C1112, C1194, C1201, and C1204 each contribute to the Zn(2+) site. Positions 1502–1524 are disordered; it reads AVEAKEKEAPRRPVRREQPGKGL.

It belongs to the RNA polymerase beta' chain family. The RNAP catalytic core consists of 2 alpha, 1 beta, 1 beta' and 1 omega subunit. When a sigma factor is associated with the core the holoenzyme is formed, which can initiate transcription. Requires Mg(2+) as cofactor. Zn(2+) serves as cofactor.

The enzyme catalyses RNA(n) + a ribonucleoside 5'-triphosphate = RNA(n+1) + diphosphate. In terms of biological role, DNA-dependent RNA polymerase catalyzes the transcription of DNA into RNA using the four ribonucleoside triphosphates as substrates. This chain is DNA-directed RNA polymerase subunit beta', found in Thermus aquaticus.